The sequence spans 226 residues: Respiratory nitrate reductase 2 gamma chain (226 aa).

Topologically, residues 1-4 (MIQY) are periplasmic. Residues 5–30 (LNVFFYDIYPYICATVFFLGSWLRYD) form a helical membrane-spanning segment. The Cytoplasmic portion of the chain corresponds to 31–48 (YGQYTWRASSSQMLDKRG). A helical transmembrane segment spans residues 49-71 (MVIWSNLFHIGILGIFFGHLFGM). Residues His-57 and His-67 each contribute to the heme b site. The Periplasmic segment spans residues 72-83 (LTPHWMYAWFLP). The helical transmembrane segment at 84-113 (VAAKQLMAMVLGGICGVLTLIGGAGLLWRR) threads the bilayer. Over 114 to 125 (LTNQRVRATSTT) the chain is Cytoplasmic. A helical transmembrane segment spans residues 126 to 149 (PDIIIMSILLIQCLLGLSTIPFSA). Over 150–183 (QYPDGSEMMKLVGWAQSIVTFRGGSSEMLNGVAF) the chain is Periplasmic. Residues 184 to 199 (VFRLHLVLGMTIFLLF) traverse the membrane as a helical segment. Heme b contacts are provided by His-188 and His-206. At 200–226 (PFTRLVHVWSAPFEYFTRRYQIVRSRR) the chain is on the cytoplasmic side.

In terms of assembly, dimer of heterotrimers each composed of an alpha, a beta and a gamma chain. Alpha and beta are catalytic chains; gamma chains are involved in binding the enzyme complex to the cytoplasmic membrane. Requires heme as cofactor.

The protein resides in the cell inner membrane. It carries out the reaction nitrate + a quinol = a quinone + nitrite + H2O. This is a second nitrate reductase enzyme which can substitute for the NRA enzyme and allows E.coli to use nitrate as an electron acceptor during anaerobic growth. The gamma chain is a membrane-embedded heme-iron unit resembling cytochrome b, which transfers electrons from quinones to the beta subunit. In Escherichia coli (strain K12), this protein is Respiratory nitrate reductase 2 gamma chain (narV).